The primary structure comprises 549 residues: Glucose-6-phosphate isomerase (549 aa).

N6-acetyllysine is present on residues K80, K228, and K234. E355 functions as the Proton donor in the catalytic mechanism. Residues H386 and K514 contribute to the active site.

It belongs to the GPI family.

The protein resides in the cytoplasm. The enzyme catalyses alpha-D-glucose 6-phosphate = beta-D-fructose 6-phosphate. Its pathway is carbohydrate biosynthesis; gluconeogenesis. The protein operates within carbohydrate degradation; glycolysis; D-glyceraldehyde 3-phosphate and glycerone phosphate from D-glucose: step 2/4. Functionally, catalyzes the reversible isomerization of glucose-6-phosphate to fructose-6-phosphate. The sequence is that of Glucose-6-phosphate isomerase from Escherichia coli O139:H28 (strain E24377A / ETEC).